We begin with the raw amino-acid sequence, 825 residues long: Zinc finger protein 229 (825 aa).

The disordered stretch occupies residues 1–26 (METLTSRHEKRALHSQASAISQDREE). The KRAB domain occupies 34-108 (LSFKDVAVVF…SHKELSSCKI (75 aa)). Residues 291–315 (KLCQYDEFSEGLRHSAHLNRHQRVP) form a C2H2-type 1; degenerate zinc finger. C2H2-type zinc fingers lie at residues 349-371 (YRCD…QGVH), 377-399 (YKCE…QRVH), 405-427 (YKCS…QRLH), 433-455 (YTCS…QHIH), 461-483 (YSCG…QKTH), 489-511 (YQCD…QRVH), and 517-539 (YKCN…QRLH). K543 is covalently cross-linked (Glycyl lysine isopeptide (Lys-Gly) (interchain with G-Cter in SUMO2)). 10 C2H2-type zinc fingers span residues 545–566 (YKCE…QRVH), 572–594 (YKCS…QRVH), 600–622 (YVCD…QRVH), 628–650 (YKCA…QRVH), 656–678 (YRCQ…QRVH), 684–706 (YTCD…QRLH), 712–734 (YTCC…KRVH), 740–762 (YRCH…QRVH), 768–790 (YKCE…QRVH), and 796–818 (YTCG…QRVH).

It belongs to the krueppel C2H2-type zinc-finger protein family.

The protein localises to the nucleus. In terms of biological role, may be involved in transcriptional regulation. The polypeptide is Zinc finger protein 229 (Homo sapiens (Human)).